Consider the following 485-residue polypeptide: Glutamyl-tRNA(Gln) amidotransferase subunit A (485 aa).

Active-site charge relay system residues include lysine 76 and serine 151. The active-site Acyl-ester intermediate is serine 175.

The protein belongs to the amidase family. GatA subfamily. As to quaternary structure, heterotrimer of A, B and C subunits.

The enzyme catalyses L-glutamyl-tRNA(Gln) + L-glutamine + ATP + H2O = L-glutaminyl-tRNA(Gln) + L-glutamate + ADP + phosphate + H(+). Functionally, allows the formation of correctly charged Gln-tRNA(Gln) through the transamidation of misacylated Glu-tRNA(Gln) in organisms which lack glutaminyl-tRNA synthetase. The reaction takes place in the presence of glutamine and ATP through an activated gamma-phospho-Glu-tRNA(Gln). This is Glutamyl-tRNA(Gln) amidotransferase subunit A from Pelagibacter ubique (strain HTCC1062).